The primary structure comprises 671 residues: DEAD-box ATP-dependent RNA helicase 7 (671 aa).

The tract at residues 1–84 (MPSLMLSDKK…EKKKSSKKVK (84 aa)) is disordered. Basic and acidic residues predominate over residues 26–41 (LDSKKGKKEQKLKLSD). Phosphoserine occurs at positions 40 and 42. Residues 50 to 60 (KKSKKKDKKRK) show a composition bias toward basic residues. A Q motif motif is present at residues 96–124 (NAVSKFRISAPLREKLKANGIEALFPIQA). The 183-residue stretch at 127–309 (FDMVLDGADL…NRFLKRDQKT (183 aa)) folds into the Helicase ATP-binding domain. ATP is bound at residue 140-147 (ARTGQGKT). The short motif at 255 to 258 (DEAD) is the DEAD box element. Residues 339–479 (LIPDIISCYS…HLAAPQPDEI (141 aa)) enclose the Helicase C-terminal domain. The tract at residues 627 to 671 (EREPLPQKRFGGGGRGNRFGGGGGNRFGGGGGRGRGGSGGRGQRY) is disordered. Gly residues predominate over residues 636–671 (FGGGGRGNRFGGGGGNRFGGGGGRGRGGSGGRGQRY).

Belongs to the DEAD box helicase family. DDX21/DDX50 subfamily.

The protein localises to the nucleus. The catalysed reaction is ATP + H2O = ADP + phosphate + H(+). This chain is DEAD-box ATP-dependent RNA helicase 7 (RH7), found in Arabidopsis thaliana (Mouse-ear cress).